The sequence spans 148 residues: Putative pre-16S rRNA nuclease (148 aa).

The protein belongs to the YqgF nuclease family.

The protein localises to the cytoplasm. Could be a nuclease involved in processing of the 5'-end of pre-16S rRNA. The chain is Putative pre-16S rRNA nuclease from Chlamydia trachomatis serovar A (strain ATCC VR-571B / DSM 19440 / HAR-13).